A 204-amino-acid chain; its full sequence is Nascent polypeptide-associated complex subunit alpha (204 aa).

Residues 1–19 are compositionally biased toward basic and acidic residues; sequence MADPRVEELPDEEVPKTNV. 2 disordered regions span residues 1 to 48 and 119 to 167; these read MADP…HSRN and LAAA…GLEA. Residues 22–32 are compositionally biased toward acidic residues; that stretch reads AGSDSESEAGE. The NAC-A/B domain occupies 46 to 111; sequence SRNEKKARKA…AKIEDLNSQA (66 aa). Residues 119-128 are compositionally biased toward low complexity; sequence LAAAEAAAGE. Residues 129 to 151 are compositionally biased toward basic and acidic residues; it reads HAGHDHDHDHGKGKAPETEAKKE. The segment covering 152–164 has biased composition (acidic residues); that stretch reads EEEDDGEEVDETG. Residues 165–204 form the UBA domain; sequence LEAKDIELVMAQANVSRKKAVKALRENDNDIVNSIMALSI.

This sequence belongs to the NAC-alpha family. In terms of assembly, part of the nascent polypeptide-associated complex (NAC), consisting of egd2 and egd1. NAC associates with ribosomes via egd1.

It localises to the cytoplasm. The protein resides in the nucleus. Its function is as follows. Component of the nascent polypeptide-associated complex (NAC), a dynamic component of the ribosomal exit tunnel, protecting the emerging polypeptides from interaction with other cytoplasmic proteins to ensure appropriate nascent protein targeting. The NAC complex also promotes mitochondrial protein import by enhancing productive ribosome interactions with the outer mitochondrial membrane and blocks the inappropriate interaction of ribosomes translating non-secretory nascent polypeptides with translocation sites in the membrane of the endoplasmic reticulum. Egd2 may also be involved in transcription regulation. The protein is Nascent polypeptide-associated complex subunit alpha (egd2) of Aspergillus clavatus (strain ATCC 1007 / CBS 513.65 / DSM 816 / NCTC 3887 / NRRL 1 / QM 1276 / 107).